The chain runs to 88 residues: Probable Fe(2+)-trafficking protein (88 aa).

The protein belongs to the Fe(2+)-trafficking protein family.

Could be a mediator in iron transactions between iron acquisition and iron-requiring processes, such as synthesis and/or repair of Fe-S clusters in biosynthetic enzymes. This chain is Probable Fe(2+)-trafficking protein, found in Neisseria gonorrhoeae (strain ATCC 700825 / FA 1090).